A 248-amino-acid chain; its full sequence is UDP-2,3-diacylglucosamine hydrolase (248 aa).

Residues D8, H10, D41, N79, and H114 each contribute to the Mn(2+) site. 79 to 80 (NR) is a binding site for substrate. Substrate is bound by residues D122, S160, D171, and H202. 2 residues coordinate Mn(2+): H202 and H204.

It belongs to the LpxH family. Requires Mn(2+) as cofactor.

It localises to the cell inner membrane. It catalyses the reaction UDP-2-N,3-O-bis[(3R)-3-hydroxytetradecanoyl]-alpha-D-glucosamine + H2O = 2-N,3-O-bis[(3R)-3-hydroxytetradecanoyl]-alpha-D-glucosaminyl 1-phosphate + UMP + 2 H(+). It functions in the pathway glycolipid biosynthesis; lipid IV(A) biosynthesis; lipid IV(A) from (3R)-3-hydroxytetradecanoyl-[acyl-carrier-protein] and UDP-N-acetyl-alpha-D-glucosamine: step 4/6. Functionally, hydrolyzes the pyrophosphate bond of UDP-2,3-diacylglucosamine to yield 2,3-diacylglucosamine 1-phosphate (lipid X) and UMP by catalyzing the attack of water at the alpha-P atom. Involved in the biosynthesis of lipid A, a phosphorylated glycolipid that anchors the lipopolysaccharide to the outer membrane of the cell. The sequence is that of UDP-2,3-diacylglucosamine hydrolase from Stenotrophomonas maltophilia (strain R551-3).